We begin with the raw amino-acid sequence, 320 residues long: Putative FBD-associated F-box protein At3g60710 (320 aa).

One can recognise an F-box domain in the interval E2–I48. An FBD domain is found at M212–L268.

This Arabidopsis thaliana (Mouse-ear cress) protein is Putative FBD-associated F-box protein At3g60710.